The chain runs to 365 residues: 3-isopropylmalate dehydrogenase (365 aa).

Residue 76 to 89 participates in NAD(+) binding; that stretch reads GPKWDQNPSELRPE. 4 residues coordinate substrate: R96, R106, R134, and D224. 3 residues coordinate Mg(2+): D224, D248, and D252. 282 to 294 serves as a coordination point for NAD(+); it reads GSAPDIAGKGMAN.

The protein belongs to the isocitrate and isopropylmalate dehydrogenases family. LeuB type 1 subfamily. In terms of assembly, homodimer. Mg(2+) serves as cofactor. It depends on Mn(2+) as a cofactor.

It is found in the cytoplasm. The enzyme catalyses (2R,3S)-3-isopropylmalate + NAD(+) = 4-methyl-2-oxopentanoate + CO2 + NADH. It functions in the pathway amino-acid biosynthesis; L-leucine biosynthesis; L-leucine from 3-methyl-2-oxobutanoate: step 3/4. Its function is as follows. Catalyzes the oxidation of 3-carboxy-2-hydroxy-4-methylpentanoate (3-isopropylmalate) to 3-carboxy-4-methyl-2-oxopentanoate. The product decarboxylates to 4-methyl-2 oxopentanoate. The sequence is that of 3-isopropylmalate dehydrogenase (leuB) from Bacillus subtilis (strain 168).